Consider the following 201-residue polypeptide: MELTLKDAQSALEVSEATFGREFNEALVHQVVVAYGAGARQGTKAQKTRAEVRGGGKKPWRQKGTGRARAGTIRSPIWVGGGRAFAAKPRDFDQKVNKKMYRGAIKSILSELIRQDRLVVVEKFGVDAPKTKALISALNEYELNDVLIVTPEVDENLFLAARNLYKVDVRDVAGIDPVSLIAFEKVLMTADAVKQLEEALA.

Residues 44–66 (KAQKTRAEVRGGGKKPWRQKGTG) are disordered. Positions 55-66 (GGKKPWRQKGTG) are enriched in basic residues.

It belongs to the universal ribosomal protein uL4 family. As to quaternary structure, part of the 50S ribosomal subunit.

Its function is as follows. One of the primary rRNA binding proteins, this protein initially binds near the 5'-end of the 23S rRNA. It is important during the early stages of 50S assembly. It makes multiple contacts with different domains of the 23S rRNA in the assembled 50S subunit and ribosome. Forms part of the polypeptide exit tunnel. The protein is Large ribosomal subunit protein uL4 of Alteromonas mediterranea (strain DSM 17117 / CIP 110805 / LMG 28347 / Deep ecotype).